The sequence spans 308 residues: Aspartate carbamoyltransferase catalytic subunit (308 aa).

Positions 55 and 56 each coordinate carbamoyl phosphate. L-aspartate is bound at residue lysine 83. The carbamoyl phosphate site is built by arginine 105, histidine 133, and glutamine 136. The L-aspartate site is built by arginine 166 and arginine 223. Positions 264 and 265 each coordinate carbamoyl phosphate.

This sequence belongs to the aspartate/ornithine carbamoyltransferase superfamily. ATCase family. As to quaternary structure, heterododecamer (2C3:3R2) of six catalytic PyrB chains organized as two trimers (C3), and six regulatory PyrI chains organized as three dimers (R2).

It catalyses the reaction carbamoyl phosphate + L-aspartate = N-carbamoyl-L-aspartate + phosphate + H(+). It functions in the pathway pyrimidine metabolism; UMP biosynthesis via de novo pathway; (S)-dihydroorotate from bicarbonate: step 2/3. Catalyzes the condensation of carbamoyl phosphate and aspartate to form carbamoyl aspartate and inorganic phosphate, the committed step in the de novo pyrimidine nucleotide biosynthesis pathway. The polypeptide is Aspartate carbamoyltransferase catalytic subunit (Salinispora tropica (strain ATCC BAA-916 / DSM 44818 / JCM 13857 / NBRC 105044 / CNB-440)).